A 697-amino-acid polypeptide reads, in one-letter code: Potassium-transporting ATPase ATP-binding subunit (697 aa).

Transmembrane regions (helical) follow at residues 55 to 75, 82 to 102, 245 to 265, and 271 to 291; these read PIMF…FLPS, GWFN…ANFA, LTFI…YLGF, and VLVA…LSAI. Asp324 acts as the 4-aspartylphosphate intermediate in catalysis. Residues Asp361, Glu365, 393–400, and Lys412 contribute to the ATP site; that span reads FKAETRMS. Mg(2+) contacts are provided by Asp535 and Asp539. The next 3 helical transmembrane spans lie at 605-625, 633-653, and 677-697; these read FAII…LNIM, AILS…PLAM, and GGVI…GLFI.

The protein belongs to the cation transport ATPase (P-type) (TC 3.A.3) family. Type IA subfamily. The system is composed of three essential subunits: KdpA, KdpB and KdpC.

Its subcellular location is the cell membrane. The enzyme catalyses K(+)(out) + ATP + H2O = K(+)(in) + ADP + phosphate + H(+). Part of the high-affinity ATP-driven potassium transport (or Kdp) system, which catalyzes the hydrolysis of ATP coupled with the electrogenic transport of potassium into the cytoplasm. This subunit is responsible for energy coupling to the transport system and for the release of the potassium ions to the cytoplasm. This Bacillus cereus (strain AH187) protein is Potassium-transporting ATPase ATP-binding subunit.